A 385-amino-acid polypeptide reads, in one-letter code: 1-deoxy-D-xylulose 5-phosphate reductoisomerase (385 aa).

The NADPH site is built by threonine 13, glycine 14, serine 15, isoleucine 16, asparagine 40, and asparagine 122. Lysine 123 is a binding site for 1-deoxy-D-xylulose 5-phosphate. Residue glutamate 124 participates in NADPH binding. A Mn(2+)-binding site is contributed by aspartate 148. Serine 149, glutamate 150, serine 177, and histidine 200 together coordinate 1-deoxy-D-xylulose 5-phosphate. Position 150 (glutamate 150) interacts with Mn(2+). Position 206 (glycine 206) interacts with NADPH. Positions 213, 218, 219, and 222 each coordinate 1-deoxy-D-xylulose 5-phosphate. Residue glutamate 222 coordinates Mn(2+).

Belongs to the DXR family. It depends on Mg(2+) as a cofactor. Mn(2+) serves as cofactor.

It carries out the reaction 2-C-methyl-D-erythritol 4-phosphate + NADP(+) = 1-deoxy-D-xylulose 5-phosphate + NADPH + H(+). It participates in isoprenoid biosynthesis; isopentenyl diphosphate biosynthesis via DXP pathway; isopentenyl diphosphate from 1-deoxy-D-xylulose 5-phosphate: step 1/6. In terms of biological role, catalyzes the NADPH-dependent rearrangement and reduction of 1-deoxy-D-xylulose-5-phosphate (DXP) to 2-C-methyl-D-erythritol 4-phosphate (MEP). The chain is 1-deoxy-D-xylulose 5-phosphate reductoisomerase from Francisella tularensis subsp. holarctica (strain FTNF002-00 / FTA).